A 251-amino-acid chain; its full sequence is 3-dehydroquinate dehydratase (251 aa).

Residues 47 to 49 (EWR) and arginine 83 each bind 3-dehydroquinate. Histidine 144 functions as the Proton donor/acceptor in the catalytic mechanism. Catalysis depends on lysine 171, which acts as the Schiff-base intermediate with substrate. The 3-dehydroquinate site is built by arginine 214, serine 233, and glutamine 237.

It belongs to the type-I 3-dehydroquinase family. As to quaternary structure, homodimer.

The catalysed reaction is 3-dehydroquinate = 3-dehydroshikimate + H2O. The protein operates within metabolic intermediate biosynthesis; chorismate biosynthesis; chorismate from D-erythrose 4-phosphate and phosphoenolpyruvate: step 3/7. Its function is as follows. Involved in the third step of the chorismate pathway, which leads to the biosynthesis of aromatic amino acids. Catalyzes the cis-dehydration of 3-dehydroquinate (DHQ) and introduces the first double bond of the aromatic ring to yield 3-dehydroshikimate. The protein is 3-dehydroquinate dehydratase of Klebsiella pneumoniae subsp. pneumoniae (strain ATCC 700721 / MGH 78578).